A 390-amino-acid polypeptide reads, in one-letter code: Transforming growth factor beta-1 proprotein (390 aa).

Positions 1–29 (MPPSGLRLLPLLLPLLWLLVLTPGRPAAG) are cleaved as a signal peptide. The segment at 30–74 (LSTCKTIDMELVKRKRIEAIRGQILSKLRLASPPSQGEVPPGPLP) is straightjacket domain. Positions 75–271 (EAVLALYNST…ATPLERAQHL (197 aa)) are arm domain. Residues asparagine 82, asparagine 136, and asparagine 176 are each glycosylated (N-linked (GlcNAc...) asparagine). The bowtie tail stretch occupies residues 226–252 (DSRDNTLQVDINGFTTGRRGDLATIHG). The Cell attachment site signature appears at 244-246 (RGD). 4 disulfide bridges follow: cysteine 285–cysteine 294, cysteine 293–cysteine 356, cysteine 322–cysteine 387, and cysteine 326–cysteine 389.

This sequence belongs to the TGF-beta family. In terms of assembly, homodimer; disulfide-linked. Interacts with the serine proteases, HTRA1 and HTRA3: the interaction with either inhibits TGFB1-mediated signaling and the HTRA protease activity is required for this inhibition. May interact with THSD4; this interaction may lead to sequestration by FBN1 microfibril assembly and attenuation of TGFB signaling. Interacts with CD109, DPT and ASPN. Interacts with EFEMP2. Interacts with TSKU; the interaction contributes to regulation of the hair cycle. As to quaternary structure, homodimer; disulfide-linked. Interacts with transforming growth factor beta-1 (TGF-beta-1) chain; interaction is non-covalent and maintains TGF-beta-1 in a latent state; each latency-associated peptide (LAP) monomer interacts with TGF-beta-1 in the other monomer. Interacts with LTBP1; leading to regulation of TGF-beta-1 activation. Interacts with LRRC32/GARP; leading to regulation of TGF-beta-1 activation on the surface of activated regulatory T-cells (Tregs). Interacts with LRRC33/NRROS; leading to regulation of TGF-beta-1 in macrophages and microglia. Interacts (via cell attachment site) with integrins ITGAV and ITGB6 (ITGAV:ITGB6), leading to release of the active TGF-beta-1. Interacts with NREP; the interaction results in a decrease in TGFB1 autoinduction. Interacts with HSP90AB1; inhibits latent TGFB1 activation. Interact with PSG9; leading to TGFB1 activation. Interacts with TGFBR3. Homodimer; disulfide-linked. Interacts with TGF-beta receptors (TGFBR1 and TGFBR2), leading to signal transduction. Transforming growth factor beta-1 proprotein: The precursor proprotein is cleaved in the Golgi apparatus by FURIN to form Transforming growth factor beta-1 (TGF-beta-1) and Latency-associated peptide (LAP) chains, which remain non-covalently linked, rendering TGF-beta-1 inactive. Post-translationally, N-glycosylated. Deglycosylation leads to activation of Transforming growth factor beta-1 (TGF-beta-1); mechanisms triggering deglycosylation-driven activation of TGF-beta-1 are however unclear. In terms of tissue distribution, highly expressed in bone. Abundantly expressed in articular cartilage and chondrocytes and is increased in osteoarthritis (OA). Colocalizes with ASPN in chondrocytes within OA lesions of articular cartilage.

It localises to the secreted. Its subcellular location is the extracellular space. The protein resides in the extracellular matrix. Functionally, transforming growth factor beta-1 proprotein: Precursor of the Latency-associated peptide (LAP) and Transforming growth factor beta-1 (TGF-beta-1) chains, which constitute the regulatory and active subunit of TGF-beta-1, respectively. Its function is as follows. Required to maintain the Transforming growth factor beta-1 (TGF-beta-1) chain in a latent state during storage in extracellular matrix. Associates non-covalently with TGF-beta-1 and regulates its activation via interaction with 'milieu molecules', such as LTBP1, LRRC32/GARP and LRRC33/NRROS, that control activation of TGF-beta-1. Interaction with LRRC33/NRROS regulates activation of TGF-beta-1 in macrophages and microglia. Interaction with LRRC32/GARP controls activation of TGF-beta-1 on the surface of activated regulatory T-cells (Tregs). Interaction with integrins (ITGAV:ITGB6 or ITGAV:ITGB8) results in distortion of the Latency-associated peptide chain and subsequent release of the active TGF-beta-1. In terms of biological role, multifunctional protein that regulates the growth and differentiation of various cell types and is involved in various processes, such as normal development, immune function, microglia function and responses to neurodegeneration. Activation into mature form follows different steps: following cleavage of the proprotein in the Golgi apparatus, Latency-associated peptide (LAP) and Transforming growth factor beta-1 (TGF-beta-1) chains remain non-covalently linked rendering TGF-beta-1 inactive during storage in extracellular matrix. At the same time, LAP chain interacts with 'milieu molecules', such as LTBP1, LRRC32/GARP and LRRC33/NRROS that control activation of TGF-beta-1 and maintain it in a latent state during storage in extracellular milieus. TGF-beta-1 is released from LAP by integrins (ITGAV:ITGB6 or ITGAV:ITGB8): integrin-binding to LAP stabilizes an alternative conformation of the LAP bowtie tail and results in distortion of the LAP chain and subsequent release of the active TGF-beta-1. Once activated following release of LAP, TGF-beta-1 acts by binding to TGF-beta receptors (TGFBR1 and TGFBR2), which transduce signal. While expressed by many cells types, TGF-beta-1 only has a very localized range of action within cell environment thanks to fine regulation of its activation by Latency-associated peptide chain (LAP) and 'milieu molecules'. Plays an important role in bone remodeling: acts as a potent stimulator of osteoblastic bone formation, causing chemotaxis, proliferation and differentiation in committed osteoblasts. Can promote either T-helper 17 cells (Th17) or regulatory T-cells (Treg) lineage differentiation in a concentration-dependent manner. At high concentrations, leads to FOXP3-mediated suppression of RORC and down-regulation of IL-17 expression, favoring Treg cell development. At low concentrations in concert with IL-6 and IL-21, leads to expression of the IL-17 and IL-23 receptors, favoring differentiation to Th17 cells. Stimulates sustained production of collagen through the activation of CREB3L1 by regulated intramembrane proteolysis (RIP). Mediates SMAD2/3 activation by inducing its phosphorylation and subsequent translocation to the nucleus. Positively regulates odontoblastic differentiation in dental papilla cells, via promotion of IPO7-mediated translocation of phosphorylated SMAD2 to the nucleus and subsequent transcription of target genes. Can induce epithelial-to-mesenchymal transition (EMT) and cell migration in various cell types. The sequence is that of Transforming growth factor beta-1 proprotein from Homo sapiens (Human).